Here is a 408-residue protein sequence, read N- to C-terminus: Arginine deiminase (408 aa).

The Amidino-cysteine intermediate role is filled by Cys397.

It belongs to the arginine deiminase family.

It is found in the cytoplasm. The catalysed reaction is L-arginine + H2O = L-citrulline + NH4(+). It functions in the pathway amino-acid degradation; L-arginine degradation via ADI pathway; carbamoyl phosphate from L-arginine: step 1/2. In Listeria innocua serovar 6a (strain ATCC BAA-680 / CLIP 11262), this protein is Arginine deiminase.